The chain runs to 145 residues: Ribonuclease VapC48 (145 aa).

Mg(2+) contacts are provided by Asp6 and Asp109. Residues 15-141 (HRASPFHDKA…RKFEGIRIRD (127 aa)) form the PINc domain.

Belongs to the PINc/VapC protein family. Mg(2+) is required as a cofactor.

Functionally, toxic component of a type II toxin-antitoxin (TA) system. An RNase. Its cognate antitoxin is VapB48. The protein is Ribonuclease VapC48 of Mycobacterium tuberculosis (strain CDC 1551 / Oshkosh).